A 277-amino-acid chain; its full sequence is Energy-coupling factor transporter ATP-binding protein EcfA1 (277 aa).

Residues 4–238 (IETQDLCHTY…PDLLSSVRLD (235 aa)) enclose the ABC transporter domain. Residue 37–44 (GPNGAGKS) participates in ATP binding.

It belongs to the ABC transporter superfamily. Energy-coupling factor EcfA family. Forms a stable energy-coupling factor (ECF) transporter complex composed of 2 membrane-embedded substrate-binding proteins (S component), 2 ATP-binding proteins (A component) and 2 transmembrane proteins (T component).

The protein resides in the cell membrane. Functionally, ATP-binding (A) component of a common energy-coupling factor (ECF) ABC-transporter complex. Unlike classic ABC transporters this ECF transporter provides the energy necessary to transport a number of different substrates. This chain is Energy-coupling factor transporter ATP-binding protein EcfA1, found in Methanospirillum hungatei JF-1 (strain ATCC 27890 / DSM 864 / NBRC 100397 / JF-1).